Consider the following 391-residue polypeptide: DNA replication and repair protein RecF (391 aa).

An ATP-binding site is contributed by 30 to 37; the sequence is GLNGQGKT.

It belongs to the RecF family.

It localises to the cytoplasm. Functionally, the RecF protein is involved in DNA metabolism; it is required for DNA replication and normal SOS inducibility. RecF binds preferentially to single-stranded, linear DNA. It also seems to bind ATP. In Kineococcus radiotolerans (strain ATCC BAA-149 / DSM 14245 / SRS30216), this protein is DNA replication and repair protein RecF.